Reading from the N-terminus, the 419-residue chain is Tyrosine--tRNA ligase (419 aa).

Y42 contributes to the L-tyrosine binding site. Residues 47–56 (ATAPSLHVGS) carry the 'HIGH' region motif. Residues Y179 and Q183 each coordinate L-tyrosine. The short motif at 239–243 (KMGKT) is the 'KMSKS' region element. Position 242 (K242) interacts with ATP. Residues 353 to 418 (VVLAALFADA…GKKKIVLVKP (66 aa)) form the S4 RNA-binding domain.

This sequence belongs to the class-I aminoacyl-tRNA synthetase family. TyrS type 1 subfamily. As to quaternary structure, homodimer.

It localises to the cytoplasm. The enzyme catalyses tRNA(Tyr) + L-tyrosine + ATP = L-tyrosyl-tRNA(Tyr) + AMP + diphosphate + H(+). Its function is as follows. Catalyzes the attachment of tyrosine to tRNA(Tyr) in a two-step reaction: tyrosine is first activated by ATP to form Tyr-AMP and then transferred to the acceptor end of tRNA(Tyr). This chain is Tyrosine--tRNA ligase, found in Caulobacter vibrioides (strain ATCC 19089 / CIP 103742 / CB 15) (Caulobacter crescentus).